We begin with the raw amino-acid sequence, 202 residues long: Holliday junction resolvase RecU (202 aa).

Mg(2+) contacts are provided by threonine 85, aspartate 87, glutamate 100, and glutamine 119.

The protein belongs to the RecU family. The cofactor is Mg(2+).

It is found in the cytoplasm. It carries out the reaction Endonucleolytic cleavage at a junction such as a reciprocal single-stranded crossover between two homologous DNA duplexes (Holliday junction).. Functionally, endonuclease that resolves Holliday junction intermediates in genetic recombination. Cleaves mobile four-strand junctions by introducing symmetrical nicks in paired strands. Promotes annealing of linear ssDNA with homologous dsDNA. Required for DNA repair, homologous recombination and chromosome segregation. In Streptococcus pyogenes serotype M6 (strain ATCC BAA-946 / MGAS10394), this protein is Holliday junction resolvase RecU.